Consider the following 602-residue polypeptide: Isocitrate dehydrogenase kinase/phosphatase (602 aa).

Residues 327 to 333 and lysine 348 each bind ATP; that span reads APGIKGM. Aspartate 383 is a catalytic residue.

Belongs to the AceK family.

It is found in the cytoplasm. The catalysed reaction is L-seryl-[isocitrate dehydrogenase] + ATP = O-phospho-L-seryl-[isocitrate dehydrogenase] + ADP + H(+). In terms of biological role, bifunctional enzyme which can phosphorylate or dephosphorylate isocitrate dehydrogenase (IDH) on a specific serine residue. This is a regulatory mechanism which enables bacteria to bypass the Krebs cycle via the glyoxylate shunt in response to the source of carbon. When bacteria are grown on glucose, IDH is fully active and unphosphorylated, but when grown on acetate or ethanol, the activity of IDH declines drastically concomitant with its phosphorylation. The sequence is that of Isocitrate dehydrogenase kinase/phosphatase from Paraburkholderia phymatum (strain DSM 17167 / CIP 108236 / LMG 21445 / STM815) (Burkholderia phymatum).